The primary structure comprises 258 residues: HLA class II histocompatibility antigen, DP beta 1 chain (258 aa).

Positions 1–29 (MMVLQVSAAPRTVALTALLMVLLTSVVQG) are cleaved as a signal peptide. The tract at residues 30–121 (RATPENYLFQ…LGGPMTLQRR (92 aa)) is beta-1. Over 30 to 225 (RATPENYLFQ…KAQSDSARSK (196 aa)) the chain is Extracellular. 2 cysteine pairs are disulfide-bonded: C44/C106 and C144/C200. Residue N48 is glycosylated (N-linked (GlcNAc...) asparagine). The tract at residues 122–215 (VQPRVNVSPS…SLDSPVTVEW (94 aa)) is beta-2. The 89-residue stretch at 124-212 (PRVNVSPSKK…EHTSLDSPVT (89 aa)) folds into the Ig-like C1-type domain. The interval 216–225 (KAQSDSARSK) is connecting peptide. Residues 226 to 246 (TLTGAGGFVLGLIICGVGIFM) form a helical membrane-spanning segment. Residues 247 to 258 (HRRSKKVQRGSA) lie on the Cytoplasmic side of the membrane.

It belongs to the MHC class II family. As to quaternary structure, heterodimer of an alpha and a beta subunit; also referred as MHC class II molecule. In the endoplasmic reticulum (ER) it forms a heterononamer; 3 MHC class II molecules bind to a CD74 homotrimer (also known as invariant chain or HLA class II histocompatibility antigen gamma chain). In the endosomal/lysosomal system; CD74 undergoes sequential degradation by various proteases; leaving a small fragment termed CLIP on each MHC class II molecule. MHC class II molecule interacts with HLA_DM, and HLA_DO in B-cells, in order to release CLIP and facilitate the binding of antigenic peptides.

The protein localises to the cell membrane. Its subcellular location is the endoplasmic reticulum membrane. The protein resides in the golgi apparatus. It is found in the trans-Golgi network membrane. It localises to the endosome membrane. The protein localises to the lysosome membrane. Its function is as follows. Binds peptides derived from antigens that access the endocytic route of antigen presenting cells (APC) and presents them on the cell surface for recognition by the CD4 T-cells. The peptide binding cleft accommodates peptides of 10-30 residues. The peptides presented by MHC class II molecules are generated mostly by degradation of proteins that access the endocytic route, where they are processed by lysosomal proteases and other hydrolases. Exogenous antigens that have been endocytosed by the APC are thus readily available for presentation via MHC II molecules, and for this reason this antigen presentation pathway is usually referred to as exogenous. As membrane proteins on their way to degradation in lysosomes as part of their normal turn-over are also contained in the endosomal/lysosomal compartments, exogenous antigens must compete with those derived from endogenous components. Autophagy is also a source of endogenous peptides, autophagosomes constitutively fuse with MHC class II loading compartments. In addition to APCs, other cells of the gastrointestinal tract, such as epithelial cells, express MHC class II molecules and CD74 and act as APCs, which is an unusual trait of the GI tract. To produce a MHC class II molecule that presents an antigen, three MHC class II molecules (heterodimers of an alpha and a beta chain) associate with a CD74 trimer in the ER to form a heterononamer. Soon after the entry of this complex into the endosomal/lysosomal system where antigen processing occurs, CD74 undergoes a sequential degradation by various proteases, including CTSS and CTSL, leaving a small fragment termed CLIP (class-II-associated invariant chain peptide). The removal of CLIP is facilitated by HLA-DM via direct binding to the alpha-beta-CLIP complex so that CLIP is released. HLA-DM stabilizes MHC class II molecules until primary high affinity antigenic peptides are bound. The MHC II molecule bound to a peptide is then transported to the cell membrane surface. In B-cells, the interaction between HLA-DM and MHC class II molecules is regulated by HLA-DO. Primary dendritic cells (DCs) also to express HLA-DO. Lysosomal microenvironment has been implicated in the regulation of antigen loading into MHC II molecules, increased acidification produces increased proteolysis and efficient peptide loading. This Homo sapiens (Human) protein is HLA class II histocompatibility antigen, DP beta 1 chain (HLA-DPB1).